A 346-amino-acid polypeptide reads, in one-letter code: Porphobilinogen deaminase (346 aa).

Cysteine 242 bears the S-(dipyrrolylmethanemethyl)cysteine mark. The tract at residues 317 to 346 (ATEPGARSGTGAVRPPETDLSNPSPMENPQ) is disordered. Positions 335–346 (DLSNPSPMENPQ) are enriched in polar residues.

This sequence belongs to the HMBS family. Monomer. The cofactor is dipyrromethane.

It catalyses the reaction 4 porphobilinogen + H2O = hydroxymethylbilane + 4 NH4(+). It participates in porphyrin-containing compound metabolism; protoporphyrin-IX biosynthesis; coproporphyrinogen-III from 5-aminolevulinate: step 2/4. Functionally, tetrapolymerization of the monopyrrole PBG into the hydroxymethylbilane pre-uroporphyrinogen in several discrete steps. The polypeptide is Porphobilinogen deaminase (Nocardia farcinica (strain IFM 10152)).